We begin with the raw amino-acid sequence, 515 residues long: Bifunctional purine biosynthesis protein PurH (515 aa).

Residues 1-145 (MTKRALISVS…KNHASVTVVV (145 aa)) enclose the MGS-like domain.

Belongs to the PurH family.

It catalyses the reaction (6R)-10-formyltetrahydrofolate + 5-amino-1-(5-phospho-beta-D-ribosyl)imidazole-4-carboxamide = 5-formamido-1-(5-phospho-D-ribosyl)imidazole-4-carboxamide + (6S)-5,6,7,8-tetrahydrofolate. It carries out the reaction IMP + H2O = 5-formamido-1-(5-phospho-D-ribosyl)imidazole-4-carboxamide. Its pathway is purine metabolism; IMP biosynthesis via de novo pathway; 5-formamido-1-(5-phospho-D-ribosyl)imidazole-4-carboxamide from 5-amino-1-(5-phospho-D-ribosyl)imidazole-4-carboxamide (10-formyl THF route): step 1/1. It participates in purine metabolism; IMP biosynthesis via de novo pathway; IMP from 5-formamido-1-(5-phospho-D-ribosyl)imidazole-4-carboxamide: step 1/1. The polypeptide is Bifunctional purine biosynthesis protein PurH (Streptococcus suis (strain 98HAH33)).